A 1847-amino-acid chain; its full sequence is Replication factor C small subunit (1847 aa).

3 consecutive DOD-type homing endonuclease domains span residues 179 to 311 (WLGY…RFGI), 780 to 927 (MLGL…ISGI), and 1348 to 1508 (LLGF…EFEV).

This sequence belongs to the activator 1 small subunits family. RfcS subfamily. Heteromultimer composed of small subunits (RfcS) and large subunits (RfcL). In terms of processing, this protein undergoes a protein self splicing that involves a post-translational excision of the intervening region (intein) followed by peptide ligation.

Part of the RFC clamp loader complex which loads the PCNA sliding clamp onto DNA. This Methanocaldococcus jannaschii (strain ATCC 43067 / DSM 2661 / JAL-1 / JCM 10045 / NBRC 100440) (Methanococcus jannaschii) protein is Replication factor C small subunit (rfcS).